The sequence spans 341 residues: MKSDPVSFDSSHDLMARPRHDWTRVEAETLYTTPFPDLLFQAQTIHRRHFDPNHVETASLLSIKTGGCPEDCGYCAQSAHYDAGVKATKLMDKDAVLETARRAKDAGAGRFCMAAAWRHPKDRDLDRVCDMISAVKALGMETCATLGMLTPEQARRLQEAGLDFYNHNVDTSPEFYDKIITTRTMQDRIETLACAREAGLKLCCGGIIGMGEQVGDRLGMLILLANLDEHPESVPINLWNEVRGVPVNDTADRPDPIALVRMIAVARIMMPKSVVRLSAGRQYMTDELQALCFVAGANSIFIGDVLLTTKNPATLRDAALLDRLGMSSPLDGVKMPAASPS.

The 220-residue stretch at 53 to 272 folds into the Radical SAM core domain; the sequence is NHVETASLLS…IAVARIMMPK (220 aa). [4Fe-4S] cluster-binding residues include Cys-68, Cys-72, and Cys-75. [2Fe-2S] cluster-binding residues include Cys-112, Cys-143, Cys-203, and Arg-276.

The protein belongs to the radical SAM superfamily. Biotin synthase family. Homodimer. The cofactor is [4Fe-4S] cluster. [2Fe-2S] cluster is required as a cofactor.

The catalysed reaction is (4R,5S)-dethiobiotin + (sulfur carrier)-SH + 2 reduced [2Fe-2S]-[ferredoxin] + 2 S-adenosyl-L-methionine = (sulfur carrier)-H + biotin + 2 5'-deoxyadenosine + 2 L-methionine + 2 oxidized [2Fe-2S]-[ferredoxin]. It participates in cofactor biosynthesis; biotin biosynthesis; biotin from 7,8-diaminononanoate: step 2/2. Its function is as follows. Catalyzes the conversion of dethiobiotin (DTB) to biotin by the insertion of a sulfur atom into dethiobiotin via a radical-based mechanism. In Nitrobacter winogradskyi (strain ATCC 25391 / DSM 10237 / CIP 104748 / NCIMB 11846 / Nb-255), this protein is Biotin synthase.